The sequence spans 142 residues: Large ribosomal subunit protein uL13 (142 aa).

Belongs to the universal ribosomal protein uL13 family. In terms of assembly, part of the 50S ribosomal subunit.

This protein is one of the early assembly proteins of the 50S ribosomal subunit, although it is not seen to bind rRNA by itself. It is important during the early stages of 50S assembly. The protein is Large ribosomal subunit protein uL13 of Caldicellulosiruptor saccharolyticus (strain ATCC 43494 / DSM 8903 / Tp8T 6331).